The chain runs to 186 residues: Probable calcium-binding protein CML25 (186 aa).

A compositionally biased stretch (low complexity) spans 1–17 (MFNKNQGSNGGSSSNVG). Residues 1-23 (MFNKNQGSNGGSSSNVGIGADSP) form a disordered region. EF-hand domains follow at residues 33–68 (TEIRELEAVFKKFDVNGDGKISSKELGAIMTSLGHE), 69–104 (VPEEELEKAITEIDRKGDGYINFEEFVELNTKGMDQ), 106–141 (DVLENLKDAFSVYDIDGNGSISAEELHEVLRSLGDE), and 142–177 (CSIAECRKMIGGVDKDGDGTIDFEEFKIMMTMGSRR). Ca(2+)-binding residues include Asp46, Asn48, Asp50, Lys52, and Glu57. 10 residues coordinate Ca(2+): Asp119, Asp121, Asn123, Ser125, Glu130, Asp155, Asp157, Asp159, Thr161, and Glu166.

Potential calcium sensor. The polypeptide is Probable calcium-binding protein CML25 (CML25) (Arabidopsis thaliana (Mouse-ear cress)).